We begin with the raw amino-acid sequence, 632 residues long: tRNA uridine 5-carboxymethylaminomethyl modification enzyme MnmG (632 aa).

Residue 14–19 participates in FAD binding; the sequence is GAGHAG. Residue 273–287 coordinates NAD(+); that stretch reads GPRYCPSFEDKIMRF.

The protein belongs to the MnmG family. Homodimer. Heterotetramer of two MnmE and two MnmG subunits. Requires FAD as cofactor.

It localises to the cytoplasm. Its function is as follows. NAD-binding protein involved in the addition of a carboxymethylaminomethyl (cmnm) group at the wobble position (U34) of certain tRNAs, forming tRNA-cmnm(5)s(2)U34. This is tRNA uridine 5-carboxymethylaminomethyl modification enzyme MnmG from Clostridium novyi (strain NT).